The chain runs to 453 residues: Fibrinogen gamma chain (453 aa).

A signal peptide spans 1–26; sequence MSWSLHPRNLILYFYALLFLSSTCVA. Residue serine 68 is modified to Phosphoserine; by FAM20C. Asparagine 78 is a glycosylation site (N-linked (GlcNAc...) (complex) asparagine). Positions 170–416 constitute a Fibrinogen C-terminal domain; it reads QIHDITGKDC…KTTMKIIPFN (247 aa). An intrachain disulfide couples cysteine 179 to cysteine 208. A glycan (N-linked (GlcNAc...) asparagine; in variant Asahi) is linked at asparagine 334. 4 residues coordinate Ca(2+): aspartate 344, aspartate 346, phenylalanine 348, and glycine 350. A disulfide bridge connects residues cysteine 352 and cysteine 365. The tract at residues 400–422 is gamma-chain polymerization, binding amino end of another fibrin alpha chain; it reads TRWYSMKKTTMKIIPFNRLTIGE. Positions 423-437 are platelet aggregation and Staphylococcus clumping; the sequence is GQQHHLGGAKQVRPE. An Isoglutamyl lysine isopeptide (Gln-Lys) (interchain with K-432) cross-link involves residue glutamine 424. Residues 424–453 are disordered; sequence QQHHLGGAKQVRPEHPAETEYDSLYPEDDL. Lysine 432 is covalently cross-linked (Isoglutamyl lysine isopeptide (Lys-Gln) (interchain with Q-424)). The span at 442–453 shows a compositional bias: acidic residues; the sequence is TEYDSLYPEDDL. Tyrosine 444 and tyrosine 448 each carry sulfotyrosine.

Heterohexamer; disulfide linked. Contains 2 sets of 3 non-identical chains (alpha, beta and gamma). The 2 heterotrimers are in head to head conformation with the N-termini in a small central domain. Conversion of fibrinogen to fibrin is triggered by thrombin, which cleaves fibrinopeptides A and B from alpha and beta chains, and thus exposes the N-terminal polymerization sites responsible for the formation of the soft clot. The soft clot is converted into the hard clot by factor XIIIA which catalyzes the epsilon-(gamma-glutamyl)lysine cross-linking between gamma chains (stronger) and between alpha chains (weaker) of different monomers. Post-translationally, sulfation of C-terminal tyrosines increases affinity for thrombin. In terms of tissue distribution, detected in blood plasma (at protein level).

The protein localises to the secreted. Its function is as follows. Together with fibrinogen alpha (FGA) and fibrinogen beta (FGB), polymerizes to form an insoluble fibrin matrix. Has a major function in hemostasis as one of the primary components of blood clots. In addition, functions during the early stages of wound repair to stabilize the lesion and guide cell migration during re-epithelialization. Was originally thought to be essential for platelet aggregation, based on in vitro studies using anticoagulated blood. However, subsequent studies have shown that it is not absolutely required for thrombus formation in vivo. Enhances expression of SELP in activated platelets via an ITGB3-dependent pathway. Maternal fibrinogen is essential for successful pregnancy. Fibrin deposition is also associated with infection, where it protects against IFNG-mediated hemorrhage. May also facilitate the antibacterial immune response via both innate and T-cell mediated pathways. This is Fibrinogen gamma chain (FGG) from Homo sapiens (Human).